The primary structure comprises 284 residues: Bifunctional protein FolD (284 aa).

NADP(+) contacts are provided by residues 163–165 (GRS), Ser-188, and Ile-229.

Belongs to the tetrahydrofolate dehydrogenase/cyclohydrolase family. In terms of assembly, homodimer.

It catalyses the reaction (6R)-5,10-methylene-5,6,7,8-tetrahydrofolate + NADP(+) = (6R)-5,10-methenyltetrahydrofolate + NADPH. It carries out the reaction (6R)-5,10-methenyltetrahydrofolate + H2O = (6R)-10-formyltetrahydrofolate + H(+). The protein operates within one-carbon metabolism; tetrahydrofolate interconversion. Functionally, catalyzes the oxidation of 5,10-methylenetetrahydrofolate to 5,10-methenyltetrahydrofolate and then the hydrolysis of 5,10-methenyltetrahydrofolate to 10-formyltetrahydrofolate. This chain is Bifunctional protein FolD, found in Campylobacter hominis (strain ATCC BAA-381 / DSM 21671 / CCUG 45161 / LMG 19568 / NCTC 13146 / CH001A).